The primary structure comprises 292 residues: Phosphatidylglycerol--prolipoprotein diacylglyceryl transferase (292 aa).

Transmembrane regions (helical) follow at residues L18–I38, L67–Y87, G105–L125, and I129–G149. Position 150 (R150) interacts with a 1,2-diacyl-sn-glycero-3-phospho-(1'-sn-glycerol). 3 helical membrane passes run Q193 to W213, G222 to V242, and G266 to L286.

The protein belongs to the Lgt family.

Its subcellular location is the cell inner membrane. It carries out the reaction L-cysteinyl-[prolipoprotein] + a 1,2-diacyl-sn-glycero-3-phospho-(1'-sn-glycerol) = an S-1,2-diacyl-sn-glyceryl-L-cysteinyl-[prolipoprotein] + sn-glycerol 1-phosphate + H(+). The protein operates within protein modification; lipoprotein biosynthesis (diacylglyceryl transfer). Catalyzes the transfer of the diacylglyceryl group from phosphatidylglycerol to the sulfhydryl group of the N-terminal cysteine of a prolipoprotein, the first step in the formation of mature lipoproteins. This is Phosphatidylglycerol--prolipoprotein diacylglyceryl transferase from Cereibacter sphaeroides (strain ATCC 17025 / ATH 2.4.3) (Rhodobacter sphaeroides).